A 448-amino-acid chain; its full sequence is Putative diacyglycerol O-acyltransferase MT3848 (448 aa).

Catalysis depends on histidine 136, which acts as the Proton acceptor.

The protein belongs to the long-chain O-acyltransferase family.

The enzyme catalyses an acyl-CoA + a 1,2-diacyl-sn-glycerol = a triacyl-sn-glycerol + CoA. The protein operates within glycerolipid metabolism; triacylglycerol biosynthesis. The polypeptide is Putative diacyglycerol O-acyltransferase MT3848 (Mycobacterium tuberculosis (strain CDC 1551 / Oshkosh)).